Consider the following 487-residue polypeptide: Serine/threonine-protein kinase 4 (487 aa).

Residue Met-1 is modified to N-acetylmethionine. At Thr-3 the chain carries Phosphothreonine. A Protein kinase domain is found at 30 to 281 (FDVLEKLGEG…ATQLLQHPFV (252 aa)). Residues 36-44 (LGEGSYGSV) and Lys-59 each bind ATP. The active-site Proton acceptor is the Asp-149. At Thr-183 the chain carries Phosphothreonine; by autocatalysis. Ser-265 is modified (phosphoserine). A coiled-coil region spans residues 290–310 (LRDLINEAMDVKLKRQESQQR). Residues 303–312 (KRQESQQREV) are compositionally biased toward basic and acidic residues. A disordered region spans residues 303–332 (KRQESQQREVDQDDEENSEEDEMDSGTMVR). The span at 313–326 (DQDDEENSEEDEMD) shows a compositional bias: acidic residues. Ser-320 is subject to Phosphoserine. Residues Thr-340 and Thr-367 each carry the phosphothreonine modification. Thr-387 is subject to Phosphothreonine; by PKB/AKT1. Phosphoserine occurs at positions 410 and 414. Residue Tyr-433 is modified to Phosphotyrosine. The 48-residue stretch at 433–480 (YEFLKSWTVEDLQKRLLALDPMMEQEIEEIRQKYQSKRQPILDAIEAK) folds into the SARAH domain.

It belongs to the protein kinase superfamily. STE Ser/Thr protein kinase family. STE20 subfamily. In terms of assembly, homodimer; mediated via the coiled-coil region. Interacts with NORE1, which inhibits autoactivation. Interacts with and stabilizes SAV1. Interacts with RASSF1. Interacts with FOXO3. Interacts with RASSF2 (via SARAH domain). Interacts with AR, PKB/AKT1, TNNI3 and SIRT1. Interacts with DLG5 (via PDZ domain 3). Interacts with MARK3 and SCRIB in the presence of DLG5. It depends on Mg(2+) as a cofactor. Post-translationally, autophosphorylated on serine and threonine residues. Phosphorylation at Thr-387 by PKB/AKT1, leads to inhibition of its: kinase activity, nuclear translocation and autophosphorylation at Thr-183. It also diminishes its cleavage by caspases and its ability to phosphorylate FOXO3. Proteolytically cleaved by caspase-3 during apoptosis at Asp-326 and Asp-349 resulting in a 37 kDa or a 39 kDa subunit respectively. The 39 kDa subunit is further cleaved into the 37 kDa form. Proteolytic cleavage results in kinase activation and nuclear translocation of the truncated form (MST1/N). It is less likely that cleavage at Asp-349 is a prerequisite for activation as this site is not conserved in the murine ortholog.

Its subcellular location is the cytoplasm. The protein resides in the nucleus. It carries out the reaction L-seryl-[protein] + ATP = O-phospho-L-seryl-[protein] + ADP + H(+). It catalyses the reaction L-threonyl-[protein] + ATP = O-phospho-L-threonyl-[protein] + ADP + H(+). Its activity is regulated as follows. Inhibited by the C-terminal non-catalytic region. Activated by caspase-cleavage. Full activation also requires homodimerization and autophosphorylation of Thr-183. Activated by RASSF1 which acts by preventing its dephosphorylation. Functionally, stress-activated, pro-apoptotic kinase which, following caspase-cleavage, enters the nucleus and induces chromatin condensation followed by internucleosomal DNA fragmentation. Key component of the Hippo signaling pathway which plays a pivotal role in organ size control and tumor suppression by restricting proliferation and promoting apoptosis. The core of this pathway is composed of a kinase cascade wherein STK3/MST2 and STK4/MST1, in complex with its regulatory protein SAV1, phosphorylates and activates LATS1/2 in complex with its regulatory protein MOB1, which in turn phosphorylates and inactivates YAP1 oncoprotein and WWTR1/TAZ. Phosphorylation of YAP1 by LATS2 inhibits its translocation into the nucleus to regulate cellular genes important for cell proliferation, cell death, and cell migration. STK3/MST2 and STK4/MST1 are required to repress proliferation of mature hepatocytes, to prevent activation of facultative adult liver stem cells (oval cells), and to inhibit tumor formation. Phosphorylates 'Ser-14' of histone H2B (H2BS14ph) during apoptosis. Phosphorylates FOXO3 upon oxidative stress, which results in its nuclear translocation and cell death initiation. Phosphorylates MOBKL1A, MOBKL1B and RASSF2. Phosphorylates TNNI3 (cardiac Tn-I) and alters its binding affinity to TNNC1 (cardiac Tn-C) and TNNT2 (cardiac Tn-T). Phosphorylates FOXO1 on 'Ser-212' and regulates its activation and stimulates transcription of PMAIP1 in a FOXO1-dependent manner. Phosphorylates SIRT1 and inhibits SIRT1-mediated p53/TP53 deacetylation, thereby promoting p53/TP53 dependent transcription and apoptosis upon DNA damage. Acts as an inhibitor of PKB/AKT1. Phosphorylates AR on 'Ser-650' and suppresses its activity by intersecting with PKB/AKT1 signaling and antagonizing formation of AR-chromatin complexes. In Colobus guereza (Mantled guereza), this protein is Serine/threonine-protein kinase 4 (STK4).